A 304-amino-acid chain; its full sequence is Acetylglutamate kinase (304 aa).

Residues 75–76, arginine 97, and asparagine 202 each bind substrate; that span reads GG.

This sequence belongs to the acetylglutamate kinase family. ArgB subfamily.

It localises to the cytoplasm. The catalysed reaction is N-acetyl-L-glutamate + ATP = N-acetyl-L-glutamyl 5-phosphate + ADP. Its pathway is amino-acid biosynthesis; L-arginine biosynthesis; N(2)-acetyl-L-ornithine from L-glutamate: step 2/4. Functionally, catalyzes the ATP-dependent phosphorylation of N-acetyl-L-glutamate. The chain is Acetylglutamate kinase from Parvibaculum lavamentivorans (strain DS-1 / DSM 13023 / NCIMB 13966).